A 210-amino-acid polypeptide reads, in one-letter code: Uracil phosphoribosyltransferase (210 aa).

5-phospho-alpha-D-ribose 1-diphosphate-binding positions include Arg78, Arg103, and 130–138 (DPMLATGGT). Uracil contacts are provided by residues Ile193 and 198–200 (GDA). Residue Asp199 coordinates 5-phospho-alpha-D-ribose 1-diphosphate.

This sequence belongs to the UPRTase family. Mg(2+) serves as cofactor.

The enzyme catalyses UMP + diphosphate = 5-phospho-alpha-D-ribose 1-diphosphate + uracil. Its pathway is pyrimidine metabolism; UMP biosynthesis via salvage pathway; UMP from uracil: step 1/1. Its activity is regulated as follows. Allosterically activated by GTP. Catalyzes the conversion of uracil and 5-phospho-alpha-D-ribose 1-diphosphate (PRPP) to UMP and diphosphate. The polypeptide is Uracil phosphoribosyltransferase (Xanthomonas euvesicatoria pv. vesicatoria (strain 85-10) (Xanthomonas campestris pv. vesicatoria)).